Consider the following 127-residue polypeptide: Large ribosomal subunit protein bL20 (127 aa).

This sequence belongs to the bacterial ribosomal protein bL20 family.

Binds directly to 23S ribosomal RNA and is necessary for the in vitro assembly process of the 50S ribosomal subunit. It is not involved in the protein synthesizing functions of that subunit. The chain is Large ribosomal subunit protein bL20 from Opitutus terrae (strain DSM 11246 / JCM 15787 / PB90-1).